The following is a 459-amino-acid chain: Flavin-containing monooxygenase FMO GS-OX5 (459 aa).

17-22 (GAGAAG) lines the FAD pocket. 212–217 (GNFASG) lines the NADP(+) pocket.

Belongs to the FMO family.

It catalyses the reaction a (Z)-omega-(methylsulfanyl)-N-sulfo-alkylhydroximate S-glucoside + NADPH + O2 + H(+) = a (Z)-omega-(methylsulfinyl)-alkyl-glucosinolate + NADP(+) + H2O. Its function is as follows. Catalyzes the conversion of methylthioalkyl glucosinolates into methylsulfinylalkyl glucosinolates. Specific for 8-methylthiooctyl (8-MTO) glucosinolates. This Arabidopsis thaliana (Mouse-ear cress) protein is Flavin-containing monooxygenase FMO GS-OX5 (FMOGS-OX5).